A 503-amino-acid chain; its full sequence is Probable cytosol aminopeptidase (503 aa).

Residues Lys268 and Asp273 each coordinate Mn(2+). Lys280 is an active-site residue. Residues Asp291, Asp350, and Glu352 each contribute to the Mn(2+) site. Residue Arg354 is part of the active site.

This sequence belongs to the peptidase M17 family. The cofactor is Mn(2+).

The protein localises to the cytoplasm. The enzyme catalyses Release of an N-terminal amino acid, Xaa-|-Yaa-, in which Xaa is preferably Leu, but may be other amino acids including Pro although not Arg or Lys, and Yaa may be Pro. Amino acid amides and methyl esters are also readily hydrolyzed, but rates on arylamides are exceedingly low.. It catalyses the reaction Release of an N-terminal amino acid, preferentially leucine, but not glutamic or aspartic acids.. Its function is as follows. Presumably involved in the processing and regular turnover of intracellular proteins. Catalyzes the removal of unsubstituted N-terminal amino acids from various peptides. In Corynebacterium efficiens (strain DSM 44549 / YS-314 / AJ 12310 / JCM 11189 / NBRC 100395), this protein is Probable cytosol aminopeptidase.